The primary structure comprises 246 residues: Processing and transport protein (246 aa).

This sequence belongs to the herpesviridae PRTP family.

In terms of biological role, this protein may affect translocation of the virus glycoproteins to membranes. It is involved in capsid maturation. The chain is Processing and transport protein (UL28) from Homo sapiens (Human).